The chain runs to 86 residues: Small ribosomal subunit protein bS20 (86 aa).

The tract at residues 1–21 (MANTKSAIKAARKSLRLHDRN) is disordered.

Belongs to the bacterial ribosomal protein bS20 family.

Its function is as follows. Binds directly to 16S ribosomal RNA. In Opitutus terrae (strain DSM 11246 / JCM 15787 / PB90-1), this protein is Small ribosomal subunit protein bS20.